The chain runs to 229 residues: ATEGARNIGQSAPEGKVQMDCPSRHNFDPECEKAFVEHIHLELASSYHAWSMWAFYARDCKAAVGMTRLCEWASHVSAQRARRMAAYVLTRGGHVDYKEIPAPKKQGWDNFEDAFSHCVANKKRILTSLQSLYQCCQSKDAHCSNFIQTDMMDEVIAWNKFLSDCLSNLHCIGSQGMGPWVFDRWLARIVMSKFKHPKIPSLSTSDLESNIPNELFDAEGDMVRAIKKL.

Residue Ala1 is modified to N-acetylalanine. The Ferritin-like diiron domain maps to 25 to 173 (HNFDPECEKA…DCLSNLHCIG (149 aa)).

This sequence belongs to the ferritin family.

The protein is Artemin of Artemia salina (Brine shrimp).